The sequence spans 353 residues: Phospho-N-acetylmuramoyl-pentapeptide-transferase (353 aa).

10 helical membrane-spanning segments follow: residues 24–44 (LGFF…ILWA), 66–86 (TPTM…VLCA), 88–108 (LSNL…FVGF), 129–149 (FGML…KGLD), 160–180 (PLFE…FLST), 192–212 (GLAS…VYVA), 229–249 (VGEL…FLWY), 256–276 (VFMG…NAIV), 281–301 (ILLV…ILQV), and 330–350 (KVIV…LLSL).

This sequence belongs to the glycosyltransferase 4 family. MraY subfamily. The cofactor is Mg(2+).

The protein resides in the cell inner membrane. It carries out the reaction UDP-N-acetyl-alpha-D-muramoyl-L-alanyl-gamma-D-glutamyl-meso-2,6-diaminopimeloyl-D-alanyl-D-alanine + di-trans,octa-cis-undecaprenyl phosphate = di-trans,octa-cis-undecaprenyl diphospho-N-acetyl-alpha-D-muramoyl-L-alanyl-D-glutamyl-meso-2,6-diaminopimeloyl-D-alanyl-D-alanine + UMP. The protein operates within cell wall biogenesis; peptidoglycan biosynthesis. Catalyzes the initial step of the lipid cycle reactions in the biosynthesis of the cell wall peptidoglycan: transfers peptidoglycan precursor phospho-MurNAc-pentapeptide from UDP-MurNAc-pentapeptide onto the lipid carrier undecaprenyl phosphate, yielding undecaprenyl-pyrophosphoryl-MurNAc-pentapeptide, known as lipid I. In Helicobacter pylori (strain J99 / ATCC 700824) (Campylobacter pylori J99), this protein is Phospho-N-acetylmuramoyl-pentapeptide-transferase.